An 883-amino-acid polypeptide reads, in one-letter code: Integrator complex subunit 6-A (883 aa).

Residues 3–227 (ILLFLLDTSA…QCLESLVQKV (225 aa)) form the VWFA domain. Positions 626–633 (MMIDEADE) match the Inhibitory loop motif.

Belongs to the Integrator subunit 6 family. Component of the Integrator complex, composed of core subunits INTS1, INTS2, INTS3, INTS4, INTS5, INTS6, INTS7, INTS8, INTS9/RC74, INTS10, INTS11/CPSF3L, INTS12, INTS13, INTS14 and INTS15. The core complex associates with protein phosphatase 2A subunits PPP2CA and PPP2R1A, to form the Integrator-PP2A (INTAC) complex.

It is found in the nucleus. Its subcellular location is the chromosome. Component of the integrator complex, a multiprotein complex that terminates RNA polymerase II (Pol II) transcription in the promoter-proximal region of genes. The integrator complex provides a quality checkpoint during transcription elongation by driving premature transcription termination of transcripts that are unfavorably configured for transcriptional elongation: the complex terminates transcription by (1) catalyzing dephosphorylation of the C-terminal domain (CTD) of Pol II subunit POLR2A/RPB1 and SUPT5H/SPT5, (2) degrading the exiting nascent RNA transcript via endonuclease activity and (3) promoting the release of Pol II from bound DNA. The integrator complex is also involved in terminating the synthesis of non-coding Pol II transcripts, such as enhancer RNAs (eRNAs), small nuclear RNAs (snRNAs), telomerase RNAs and long non-coding RNAs (lncRNAs). Within the integrator complex, INTS6 acts as a molecular adapter that promotes assembly of protein phosphatase 2A (PP2A) subunits to the integrator core complex, promoting recruitment of PP2A to transcription pause-release checkpoint. The polypeptide is Integrator complex subunit 6-A (ints6-a) (Xenopus laevis (African clawed frog)).